A 110-amino-acid polypeptide reads, in one-letter code: ATP synthase subunit c (110 aa).

The next 3 membrane-spanning stretches (helical) occupy residues 4 to 24, 37 to 57, and 81 to 101; these read FFVILMVALVVVLTASAVFAA, ATAGALIGLGAAAGGGGAGMG, and FIVGLALIESLVIYVLVFVLI.

This sequence belongs to the ATPase C chain family. F-type ATPases have 2 components, F(1) - the catalytic core - and F(0) - the membrane proton channel. F(1) has five subunits: alpha(3), beta(3), gamma(1), delta(1), epsilon(1). F(0) has three main subunits: a(1), b(2) and c(10-14). The alpha and beta chains form an alternating ring which encloses part of the gamma chain. F(1) is attached to F(0) by a central stalk formed by the gamma and epsilon chains, while a peripheral stalk is formed by the delta and b chains.

It localises to the cell inner membrane. In terms of biological role, f(1)F(0) ATP synthase produces ATP from ADP in the presence of a proton or sodium gradient. F-type ATPases consist of two structural domains, F(1) containing the extramembraneous catalytic core and F(0) containing the membrane proton channel, linked together by a central stalk and a peripheral stalk. During catalysis, ATP synthesis in the catalytic domain of F(1) is coupled via a rotary mechanism of the central stalk subunits to proton translocation. Key component of the F(0) channel; it plays a direct role in translocation across the membrane. A homomeric c-ring of between 10-14 subunits forms the central stalk rotor element with the F(1) delta and epsilon subunits. This chain is ATP synthase subunit c, found in Thermodesulfovibrio yellowstonii (strain ATCC 51303 / DSM 11347 / YP87).